Here is a 284-residue protein sequence, read N- to C-terminus: RNA polymerase sigma factor RpoH (284 aa).

The segment at 53-122 (LILSHLRFVV…IHEYVLRNWR (70 aa)) is sigma-70 factor domain-2. Residues 77–80 (DLIQ) carry the Interaction with polymerase core subunit RpoC motif. The interval 228–280 (AMQGLDERSQDIIRARWLDEDNKSTLQELADRYGVSAERVRQLEKNAMKKLRA) is sigma-70 factor domain-4. Positions 253 to 272 (LQELADRYGVSAERVRQLEK) form a DNA-binding region, H-T-H motif.

It belongs to the sigma-70 factor family. RpoH subfamily. As to quaternary structure, interacts with the RNA polymerase core enzyme.

It is found in the cytoplasm. Functionally, sigma factors are initiation factors that promote the attachment of RNA polymerase to specific initiation sites and are then released. This sigma factor is involved in regulation of expression of heat shock genes. This is RNA polymerase sigma factor RpoH from Escherichia coli O6:H1 (strain CFT073 / ATCC 700928 / UPEC).